A 285-amino-acid chain; its full sequence is Shikimate dehydrogenase (NADP(+)) (285 aa).

Shikimate contacts are provided by residues 19–21 (SLS) and Thr66. Lys70 acts as the Proton acceptor in catalysis. Positions 91 and 107 each coordinate shikimate. NADP(+) contacts are provided by residues 129–133 (GSGGA) and Leu228. Tyr230 provides a ligand contact to shikimate. NADP(+) is bound at residue Gly251.

This sequence belongs to the shikimate dehydrogenase family. Homodimer.

It catalyses the reaction shikimate + NADP(+) = 3-dehydroshikimate + NADPH + H(+). The protein operates within metabolic intermediate biosynthesis; chorismate biosynthesis; chorismate from D-erythrose 4-phosphate and phosphoenolpyruvate: step 4/7. Its function is as follows. Involved in the biosynthesis of the chorismate, which leads to the biosynthesis of aromatic amino acids. Catalyzes the reversible NADPH linked reduction of 3-dehydroshikimate (DHSA) to yield shikimate (SA). This chain is Shikimate dehydrogenase (NADP(+)), found in Prochlorococcus marinus subsp. pastoris (strain CCMP1986 / NIES-2087 / MED4).